The primary structure comprises 891 residues: Mating-type protein A-alpha Y1 (891 aa).

The segment at residues 146 to 205 (SKKPRPKFHSEYTPLLELYFRFNAYPTYADRRVLAEKTGMLTRQITVWFQNHRRRAKGPL) is a DNA-binding region (homeobox). Disordered stretches follow at residues 241–291 (PITL…PSTL), 319–339 (DIEM…LPKG), 393–437 (TRKP…RRVS), 610–718 (ARRK…EQSL), and 800–822 (MNWT…GGDE). Polar residues predominate over residues 244–257 (LGNNKTPDLTTSSR). Residues 328 to 337 (PKRRKMKKLP) show a composition bias toward basic residues. The segment covering 427-437 (ASSTVPSRRVS) has biased composition (low complexity). Positions 627–638 (KKDKKERKKAGL) are enriched in basic residues. Composition is skewed to low complexity over residues 651 to 667 (VSSR…TSAR) and 676 to 710 (QPSS…SMPS). Residues 800-818 (MNWTASVGSNAQDPASQES) show a composition bias toward polar residues.

It localises to the nucleus. Functionally, specifies A-alpha-1 mating-type. May regulate the expression of genes specific to the homokaryotic cell type. This Schizophyllum commune (Split gill fungus) protein is Mating-type protein A-alpha Y1.